The sequence spans 907 residues: Protein translocase subunit SecA (907 aa).

ATP-binding positions include Gln-87, 105-109, and Asp-512; that span reads GEGKT. Residues 834 to 907 form a disordered region; it reads QEDVERMEEQ…KKYKQCHGKI (74 aa). Basic and acidic residues-rich tracts occupy residues 836–853 and 873–888; these read DVER…EAAR and EEAH…KVGR. Residues Cys-892, Cys-894, Cys-903, and His-904 each contribute to the Zn(2+) site. The segment covering 898–907 has biased composition (basic residues); the sequence is KKYKQCHGKI.

This sequence belongs to the SecA family. In terms of assembly, monomer and homodimer. Part of the essential Sec protein translocation apparatus which comprises SecA, SecYEG and auxiliary proteins SecDF-YajC and YidC. Zn(2+) serves as cofactor.

It localises to the cell inner membrane. Its subcellular location is the cytoplasm. The enzyme catalyses ATP + H2O + cellular proteinSide 1 = ADP + phosphate + cellular proteinSide 2.. In terms of biological role, part of the Sec protein translocase complex. Interacts with the SecYEG preprotein conducting channel. Has a central role in coupling the hydrolysis of ATP to the transfer of proteins into and across the cell membrane, serving both as a receptor for the preprotein-SecB complex and as an ATP-driven molecular motor driving the stepwise translocation of polypeptide chains across the membrane. In Aliivibrio fischeri (strain ATCC 700601 / ES114) (Vibrio fischeri), this protein is Protein translocase subunit SecA.